The primary structure comprises 259 residues: 3-deoxy-manno-octulosonate cytidylyltransferase (259 aa).

Belongs to the KdsB family.

The protein resides in the cytoplasm. It catalyses the reaction 3-deoxy-alpha-D-manno-oct-2-ulosonate + CTP = CMP-3-deoxy-beta-D-manno-octulosonate + diphosphate. It participates in nucleotide-sugar biosynthesis; CMP-3-deoxy-D-manno-octulosonate biosynthesis; CMP-3-deoxy-D-manno-octulosonate from 3-deoxy-D-manno-octulosonate and CTP: step 1/1. The protein operates within bacterial outer membrane biogenesis; lipopolysaccharide biosynthesis. Activates KDO (a required 8-carbon sugar) for incorporation into bacterial lipopolysaccharide in Gram-negative bacteria. The protein is 3-deoxy-manno-octulosonate cytidylyltransferase of Nitrosococcus oceani (strain ATCC 19707 / BCRC 17464 / JCM 30415 / NCIMB 11848 / C-107).